We begin with the raw amino-acid sequence, 433 residues long: Trigger factor (433 aa).

Residues 161–246 (EDRVVIDFVG…LKKVENIVLP (86 aa)) form the PPIase FKBP-type domain.

It belongs to the FKBP-type PPIase family. Tig subfamily.

The protein resides in the cytoplasm. It catalyses the reaction [protein]-peptidylproline (omega=180) = [protein]-peptidylproline (omega=0). In terms of biological role, involved in protein export. Acts as a chaperone by maintaining the newly synthesized protein in an open conformation. Functions as a peptidyl-prolyl cis-trans isomerase. The polypeptide is Trigger factor (Actinobacillus pleuropneumoniae serotype 7 (strain AP76)).